A 219-amino-acid polypeptide reads, in one-letter code: tRNA (guanine-N(7)-)-methyltransferase (219 aa).

E43, D68, E101, and N124 together coordinate S-adenosyl-L-methionine. Substrate-binding residues include K128 and D160.

This sequence belongs to the class I-like SAM-binding methyltransferase superfamily. TrmB family.

The enzyme catalyses guanosine(46) in tRNA + S-adenosyl-L-methionine = N(7)-methylguanosine(46) in tRNA + S-adenosyl-L-homocysteine. The protein operates within tRNA modification; N(7)-methylguanine-tRNA biosynthesis. In terms of biological role, catalyzes the formation of N(7)-methylguanine at position 46 (m7G46) in tRNA. This is tRNA (guanine-N(7)-)-methyltransferase from Clostridium beijerinckii (strain ATCC 51743 / NCIMB 8052) (Clostridium acetobutylicum).